The primary structure comprises 167 residues: Small ribosomal subunit protein uS5 (167 aa).

In terms of domain architecture, S5 DRBM spans 12 to 75; the sequence is LNEKLIAVNR…EKARRNIRDV (64 aa).

The protein belongs to the universal ribosomal protein uS5 family. As to quaternary structure, part of the 30S ribosomal subunit. Contacts proteins S4 and S8.

In terms of biological role, with S4 and S12 plays an important role in translational accuracy. Located at the back of the 30S subunit body where it stabilizes the conformation of the head with respect to the body. This chain is Small ribosomal subunit protein uS5, found in Psychromonas ingrahamii (strain DSM 17664 / CCUG 51855 / 37).